Consider the following 600-residue polypeptide: UvrABC system protein C (600 aa).

A GIY-YIG domain is found at 15–100; that stretch reads NSAGVYQYFN…IKQLHPKYNI (86 aa). The UVR domain maps to 203 to 238; sequence SILIKNLEKQMLVLAQNENYEEAAKVRDQIVTIKDL.

It belongs to the UvrC family. As to quaternary structure, interacts with UvrB in an incision complex.

Its subcellular location is the cytoplasm. Its function is as follows. The UvrABC repair system catalyzes the recognition and processing of DNA lesions. UvrC both incises the 5' and 3' sides of the lesion. The N-terminal half is responsible for the 3' incision and the C-terminal half is responsible for the 5' incision. This Campylobacter jejuni subsp. jejuni serotype O:23/36 (strain 81-176) protein is UvrABC system protein C.